The sequence spans 282 residues: HTH-type transcriptional activator RhaR (282 aa).

The HTH araC/xylS-type domain maps to 179–277 (DKLITALANS…GMTPSQWRHL (99 aa)). 2 DNA-binding regions (H-T-H motif) span residues 196–217 (DAFC…RAQT) and 244–267 (ISEI…TRET).

In terms of assembly, binds DNA as a dimer.

The protein resides in the cytoplasm. Functionally, activates expression of the rhaSR operon in response to L-rhamnose. This is HTH-type transcriptional activator RhaR from Salmonella dublin (strain CT_02021853).